The chain runs to 325 residues: ATP phosphoribosyltransferase (325 aa).

This sequence belongs to the ATP phosphoribosyltransferase family. Long subfamily. The cofactor is Mg(2+).

It is found in the cytoplasm. The catalysed reaction is 1-(5-phospho-beta-D-ribosyl)-ATP + diphosphate = 5-phospho-alpha-D-ribose 1-diphosphate + ATP. It participates in amino-acid biosynthesis; L-histidine biosynthesis; L-histidine from 5-phospho-alpha-D-ribose 1-diphosphate: step 1/9. Its activity is regulated as follows. Feedback inhibited by histidine. Catalyzes the condensation of ATP and 5-phosphoribose 1-diphosphate to form N'-(5'-phosphoribosyl)-ATP (PR-ATP). Has a crucial role in the pathway because the rate of histidine biosynthesis seems to be controlled primarily by regulation of HisG enzymatic activity. The chain is ATP phosphoribosyltransferase from Rhodopseudomonas palustris (strain HaA2).